Here is a 267-residue protein sequence, read N- to C-terminus: DNA damage-regulated autophagy modulator protein 2 (267 aa).

6 helical membrane-spanning segments follow: residues 8 to 28, 53 to 73, 87 to 107, 118 to 138, 160 to 180, and 203 to 223; these read LSFL…FSYI, RCLF…TIYV, LIIK…LGLS, FIVH…YMFV, LLLV…SSIL, and VLHI…FGFF.

The protein belongs to the DRAM/TMEM150 family.

The protein resides in the lysosome membrane. The protein localises to the photoreceptor inner segment. It localises to the apical cell membrane. Its function is as follows. Plays a role in the initiation of autophagy. In the retina, might be involved in the process of photoreceptor cells renewal and recycling to preserve visual function. Induces apoptotic cell death when coexpressed with DRAM1. The sequence is that of DNA damage-regulated autophagy modulator protein 2 (Dram2) from Rattus norvegicus (Rat).